Here is a 1161-residue protein sequence, read N- to C-terminus: Mitogen-activated protein kinase kinase kinase (1161 aa).

The region spanning 56-120 (GDGSLWTALY…PKDFVTDEDP (65 aa)) is the SH3 domain. The Protein kinase domain maps to 142 to 402 (LDIKEVIGSG…KEILKQLESI (261 aa)). Residues 148 to 156 (IGSGGFCKV) and Lys-169 each bind ATP. The Proton acceptor role is filled by Asp-264. Thr-300 carries the post-translational modification Phosphothreonine; by autocatalysis. Ser-304 is modified (phosphoserine; by autocatalysis). 2 leucine-zipper regions span residues 426-447 (IAGVLHDLREKEKELRNKEEQL) and 461-482 (LKIREQNLRERERVLIERELVM). Ser-525 and Ser-560 each carry phosphoserine. Disordered stretches follow at residues 560–615 (SQLS…GSGG) and 658–678 (TTNNNNNNNNSISANNNNQLN). Over residues 571–583 (AQTSTHSSFSKSA) the composition is skewed to polar residues. Residues 591 to 601 (QQQNQQQVASL) are compositionally biased toward low complexity. Residues Ser-685, Ser-773, and Ser-792 each carry the phosphoserine modification. The interval 790–830 (GNSPAVGRKKHSLDSSSHHPPANGSNSFALPNQLTLPSEDN) is disordered. The span at 812–830 (NGSNSFALPNQLTLPSEDN) shows a compositional bias: polar residues. Phosphothreonine is present on Thr-862. Disordered regions lie at residues 988-1014 (RSASPSLSSSSTTASASPSIASTEAVN), 1045-1093 (EQRQ…SAGS), and 1137-1161 (GGSSRSLKRKGKKPQTQSCEQLERC). Low complexity predominate over residues 989-1010 (SASPSLSSSSTTASASPSIAST). The residue at position 993 (Ser-993) is a Phosphoserine. Residues 1052–1063 (NQKKQRPKHITK) are compositionally biased toward basic residues. The span at 1073–1086 (GQHHEHDDHNDPQH) shows a compositional bias: basic and acidic residues. The segment covering 1150–1161 (PQTQSCEQLERC) has biased composition (polar residues).

Belongs to the protein kinase superfamily. STE Ser/Thr protein kinase family. MAP kinase kinase kinase subfamily. As to quaternary structure, homodimer. It depends on Mg(2+) as a cofactor. Autophosphorylation on serine and threonine residues within the activation loop plays a role in enzyme activation. In terms of tissue distribution, expressed both maternally and zygotically. Expressed uniformly in large quantities in the early embryo (stages 1-4). In the late embryo, expression is ubiquitous, but expression levels are dramatically reduced. Expressed in the adult head and thorax, and in S2 cells.

The catalysed reaction is L-seryl-[protein] + ATP = O-phospho-L-seryl-[protein] + ADP + H(+). The enzyme catalyses L-threonyl-[protein] + ATP = O-phospho-L-threonyl-[protein] + ADP + H(+). With respect to regulation, homodimerization via the leucine zipper domains is required for autophosphorylation and subsequent activation. Activated by C6-ceramide. In terms of biological role, activates the JUN N-terminal pathway during dorsal closure. This is Mitogen-activated protein kinase kinase kinase from Drosophila melanogaster (Fruit fly).